The sequence spans 537 residues: uncharacterized protein (537 aa).

The signal sequence occupies residues 1-15; sequence MALFQLFSFLNVTLG. A run of 2 helical transmembrane segments spans residues 459–479 and 490–510; these read VLFS…GCCF and VILL…LGFT.

It is found in the host membrane. This is an uncharacterized protein from Citrus sinensis (Sweet orange).